Consider the following 161-residue polypeptide: MPSFDIVSKMNEVDLRNAVDNAVREVSTRFDFRGVEATIELKDLTVTLRSESDFQVRQLEDLFRNHCSKRNLSTSGVEIEDEPVHSGKFYTLTMTFKQGIDQPTAKEIVKYIKDTKAKVQTSIQGDKVRVTGKKRDDLQETIALLKKSNIELPLQYENFRD.

The protein belongs to the YajQ family.

Its function is as follows. Nucleotide-binding protein. The polypeptide is Nucleotide-binding protein lpg1167 (Legionella pneumophila subsp. pneumophila (strain Philadelphia 1 / ATCC 33152 / DSM 7513)).